Consider the following 475-residue polypeptide: Dynein regulatory complex subunit 4 (475 aa).

The tract at residues Met-1 to Thr-22 is disordered. The regulates microtubule-binding stretch occupies residues Met-1–Ser-113. Coiled-coil stretches lie at residues Leu-20 to Leu-104, Arg-142 to Glu-200, and Lys-242 to Val-426. The interval Glu-114 to Met-257 is microtubule-binding.

The protein belongs to the DRC4 family. As to quaternary structure, component of the nexin-dynein regulatory complex (N-DRC). Interacts with microtubules.

The protein resides in the cytoplasm. Its subcellular location is the cytoskeleton. The protein localises to the cell projection. It is found in the cilium. It localises to the flagellum. The protein resides in the cilium axoneme. Its subcellular location is the cilium basal body. The protein localises to the golgi apparatus. It is found in the flagellum axoneme. Its function is as follows. Component of the nexin-dynein regulatory complex (N-DRC), a key regulator of ciliary/flagellar motility which maintains the alignment and integrity of the distal axoneme and regulates microtubule sliding in motile axonemes. Plays an important role in the assembly of the N-DRC linker. Plays dual roles at both the primary (or non-motile) cilia to regulate hedgehog signaling and in motile cilia to coordinate cilia movement. Required for proper slow muscle development and positively regulates ciliary smoothened (SMO)-dependent Hedgehog (Hh) signaling pathway. Required for tether cilia motility which is essential for normal otolith formation and localization in the developing inner ear. The protein is Dynein regulatory complex subunit 4 (gas8) of Danio rerio (Zebrafish).